The chain runs to 412 residues: Imidazolonepropionase (412 aa).

Fe(3+) contacts are provided by His-76 and His-78. His-76 and His-78 together coordinate Zn(2+). The 4-imidazolone-5-propanoate site is built by Arg-85, Tyr-148, and His-181. Tyr-148 serves as a coordination point for N-formimidoyl-L-glutamate. A Fe(3+)-binding site is contributed by His-242. His-242 is a Zn(2+) binding site. Residue Glu-245 participates in 4-imidazolone-5-propanoate binding. Asp-317 serves as a coordination point for Fe(3+). Zn(2+) is bound at residue Asp-317. N-formimidoyl-L-glutamate is bound by residues Asn-319 and Gly-321. Ser-322 provides a ligand contact to 4-imidazolone-5-propanoate.

This sequence belongs to the metallo-dependent hydrolases superfamily. HutI family. Zn(2+) serves as cofactor. Requires Fe(3+) as cofactor.

It is found in the cytoplasm. It carries out the reaction 4-imidazolone-5-propanoate + H2O = N-formimidoyl-L-glutamate. The protein operates within amino-acid degradation; L-histidine degradation into L-glutamate; N-formimidoyl-L-glutamate from L-histidine: step 3/3. In terms of biological role, catalyzes the hydrolytic cleavage of the carbon-nitrogen bond in imidazolone-5-propanoate to yield N-formimidoyl-L-glutamate. It is the third step in the universal histidine degradation pathway. In Staphylococcus aureus (strain USA300 / TCH1516), this protein is Imidazolonepropionase.